The sequence spans 614 residues: Dihydroxy-acid dehydratase (614 aa).

Asp-81 is a binding site for Mg(2+). Cys-122 provides a ligand contact to [2Fe-2S] cluster. Asp-123 and Lys-124 together coordinate Mg(2+). N6-carboxylysine is present on Lys-124. Cys-196 contributes to the [2Fe-2S] cluster binding site. Glu-492 contacts Mg(2+). Residue Ser-518 is the Proton acceptor of the active site.

Belongs to the IlvD/Edd family. Homodimer. [2Fe-2S] cluster serves as cofactor. It depends on Mg(2+) as a cofactor.

The enzyme catalyses (2R)-2,3-dihydroxy-3-methylbutanoate = 3-methyl-2-oxobutanoate + H2O. It catalyses the reaction (2R,3R)-2,3-dihydroxy-3-methylpentanoate = (S)-3-methyl-2-oxopentanoate + H2O. It participates in amino-acid biosynthesis; L-isoleucine biosynthesis; L-isoleucine from 2-oxobutanoate: step 3/4. It functions in the pathway amino-acid biosynthesis; L-valine biosynthesis; L-valine from pyruvate: step 3/4. In terms of biological role, functions in the biosynthesis of branched-chain amino acids. Catalyzes the dehydration of (2R,3R)-2,3-dihydroxy-3-methylpentanoate (2,3-dihydroxy-3-methylvalerate) into 2-oxo-3-methylpentanoate (2-oxo-3-methylvalerate) and of (2R)-2,3-dihydroxy-3-methylbutanoate (2,3-dihydroxyisovalerate) into 2-oxo-3-methylbutanoate (2-oxoisovalerate), the penultimate precursor to L-isoleucine and L-valine, respectively. This chain is Dihydroxy-acid dehydratase, found in Ruegeria sp. (strain TM1040) (Silicibacter sp.).